We begin with the raw amino-acid sequence, 336 residues long: NADH-quinone oxidoreductase subunit H (336 aa).

A run of 8 helical transmembrane segments spans residues 9 to 29, 77 to 97, 116 to 136, 156 to 176, 188 to 208, 236 to 256, 275 to 295, and 315 to 335; these read LVWIVLLAIVLILCVAYLTYA, FLFAPVIIFVLALVGWAVIPF, LGVMYLLGVAALEVYGTIIAG, ISYEIVIAPVVMTVILLTGSL, LPYWVDILMLPMTFIFFVSIL, IPFALFFLGEYANMILSSSIM, IVPGFIWFILKIVFVLFCFLI, and VFLPVTLLWIVVIGGLVAFNI.

The protein belongs to the complex I subunit 1 family. As to quaternary structure, NDH-1 is composed of 14 different subunits. Subunits NuoA, H, J, K, L, M, N constitute the membrane sector of the complex.

Its subcellular location is the cell inner membrane. The catalysed reaction is a quinone + NADH + 5 H(+)(in) = a quinol + NAD(+) + 4 H(+)(out). Its function is as follows. NDH-1 shuttles electrons from NADH, via FMN and iron-sulfur (Fe-S) centers, to quinones in the respiratory chain. The immediate electron acceptor for the enzyme in this species is believed to be ubiquinone. Couples the redox reaction to proton translocation (for every two electrons transferred, four hydrogen ions are translocated across the cytoplasmic membrane), and thus conserves the redox energy in a proton gradient. This subunit may bind ubiquinone. The sequence is that of NADH-quinone oxidoreductase subunit H from Neorickettsia sennetsu (strain ATCC VR-367 / Miyayama) (Ehrlichia sennetsu).